The sequence spans 263 residues: tRNA (guanine-N(7)-)-methyltransferase (263 aa).

Residues 1-10 are compositionally biased toward polar residues; that stretch reads MLPQDPSTEP. A disordered region spans residues 1 to 38; that stretch reads MLPQDPSTEPTPADDAAPVDSAGQASAPSPADPEGVAH. Residues Glu91, Glu116, Asp143, and Asp166 each contribute to the S-adenosyl-L-methionine site. The active site involves Asp166. Lys170 lines the substrate pocket. Residues 172–177 form an interaction with RNA region; it reads RHNKRR. Substrate contacts are provided by residues Asp202 and 240–243; that span reads TKFE.

It belongs to the class I-like SAM-binding methyltransferase superfamily. TrmB family.

The enzyme catalyses guanosine(46) in tRNA + S-adenosyl-L-methionine = N(7)-methylguanosine(46) in tRNA + S-adenosyl-L-homocysteine. Its pathway is tRNA modification; N(7)-methylguanine-tRNA biosynthesis. Catalyzes the formation of N(7)-methylguanine at position 46 (m7G46) in tRNA. The polypeptide is tRNA (guanine-N(7)-)-methyltransferase (Cupriavidus necator (strain ATCC 17699 / DSM 428 / KCTC 22496 / NCIMB 10442 / H16 / Stanier 337) (Ralstonia eutropha)).